A 152-amino-acid chain; its full sequence is uncharacterized protein (152 aa).

Transmembrane regions (helical) follow at residues 15–35 (IINVFVSFGFNLILGILIYDI), 43–63 (LVVACILIAMPIIAFLILILT), and 117–137 (TFLLLLIAFLAFGLIFTKLLI).

It to M.jannaschii MJ0129 and MJ0587.

It localises to the cell membrane. This is an uncharacterized protein from Methanocaldococcus jannaschii (strain ATCC 43067 / DSM 2661 / JAL-1 / JCM 10045 / NBRC 100440) (Methanococcus jannaschii).